Here is a 108-residue protein sequence, read N- to C-terminus: Small ribosomal subunit protein uS17 (108 aa).

It belongs to the universal ribosomal protein uS17 family. In terms of assembly, part of the 30S ribosomal subunit.

Its function is as follows. One of the primary rRNA binding proteins, it binds specifically to the 5'-end of 16S ribosomal RNA. The polypeptide is Small ribosomal subunit protein uS17 (Methanospirillum hungatei JF-1 (strain ATCC 27890 / DSM 864 / NBRC 100397 / JF-1)).